Here is a 216-residue protein sequence, read N- to C-terminus: GTPase IMAP family member GIMD1 (216 aa).

Positions 5–216 (KMTINLALFG…ENCYQVLTFK (212 aa)) constitute an AIG1-type G domain. Residues 14-22 (GMTQSGKSS), Ser-35, and 147-149 (HAE) contribute to the GTP site.

It belongs to the TRAFAC class TrmE-Era-EngA-EngB-Septin-like GTPase superfamily. AIG1/Toc34/Toc159-like paraseptin GTPase family. IAN subfamily.

This is GTPase IMAP family member GIMD1 (GIMD1) from Bos taurus (Bovine).